The following is a 137-amino-acid chain: MLQPKRTKYRKQFKGRIKGVAKGGFDLAFGEFGLKALEPNRVNAREIEAARRAITRYMKRAGRVWIRVFPDVPVTAKPTEVRMGKGKGSVEYWACKVKPGRMMFEIDGVSEEIAREALRLGSAKLSVKTRFVQRIAE.

This sequence belongs to the universal ribosomal protein uL16 family. As to quaternary structure, part of the 50S ribosomal subunit.

In terms of biological role, binds 23S rRNA and is also seen to make contacts with the A and possibly P site tRNAs. This chain is Large ribosomal subunit protein uL16, found in Allorhizobium ampelinum (strain ATCC BAA-846 / DSM 112012 / S4) (Agrobacterium vitis (strain S4)).